A 1017-amino-acid polypeptide reads, in one-letter code: Probable beta-galactosidase B (1017 aa).

Positions 1–20 are cleaved as a signal peptide; that stretch reads MTRITKLCVLLLSSIGLLAA. Asn23 carries an N-linked (GlcNAc...) asparagine glycan. Tyr90 is a substrate binding site. N-linked (GlcNAc...) asparagine glycosylation is present at Asn100. Residues Asn135, Ala136, and Glu137 each coordinate substrate. Residue Asn158 is glycosylated (N-linked (GlcNAc...) asparagine). Position 195 (Asn195) interacts with substrate. Glu196 serves as the catalytic Proton donor. The N-linked (GlcNAc...) asparagine glycan is linked to Asn211. Tyr265 serves as a coordination point for substrate. An intrachain disulfide couples Cys271 to Cys324. The active-site Nucleophile is the Glu308. Tyr373 lines the substrate pocket. 11 N-linked (GlcNAc...) asparagine glycosylation sites follow: Asn411, Asn417, Asn456, Asn628, Asn681, Asn737, Asn770, Asn777, Asn785, Asn828, and Asn829.

This sequence belongs to the glycosyl hydrolase 35 family.

It is found in the secreted. It carries out the reaction Hydrolysis of terminal non-reducing beta-D-galactose residues in beta-D-galactosides.. Functionally, cleaves beta-linked terminal galactosyl residues from gangliosides, glycoproteins, and glycosaminoglycans. The sequence is that of Probable beta-galactosidase B (lacB) from Aspergillus niger (strain ATCC MYA-4892 / CBS 513.88 / FGSC A1513).